A 102-amino-acid polypeptide reads, in one-letter code: Colipase-like protein 2 (102 aa).

The first 23 residues, methionine 1–serine 23, serve as a signal peptide directing secretion. Intrachain disulfides connect cysteine 36-cysteine 47, cysteine 42-cysteine 58, cysteine 46-cysteine 80, cysteine 68-cysteine 88, and cysteine 82-cysteine 99.

The protein belongs to the colipase family.

It localises to the secreted. The chain is Colipase-like protein 2 (Clpsl2) from Mus musculus (Mouse).